Reading from the N-terminus, the 160-residue chain is Nitrate reductase [NADH] (160 aa).

Thr37 is an FAD binding site.

It belongs to the nitrate reductase family. Homodimer. FAD serves as cofactor. Requires heme as cofactor. It depends on Mo-molybdopterin as a cofactor.

The enzyme catalyses nitrite + NAD(+) + H2O = nitrate + NADH + H(+). Its function is as follows. Nitrate reductase is a key enzyme involved in the first step of nitrate assimilation in plants, fungi and bacteria. The protein is Nitrate reductase [NADH] (NIA) of Lotus tetragonolobus (Winged pea).